The sequence spans 1023 residues: RTX-I toxin determinant A from serotypes 1/9 (1023 aa).

Transmembrane regions (helical) follow at residues 226-256 (NNLPDLSLAGPGFDAVSGILSVVSASFILSN), 297-326 (STTAATGGLIGSVVALAISPLSFLNVADKF), and 367-406 (INSVLSARSAGVGAAATGSLVGAPVAALVSAITGIISGIL). Hemolysin-type calcium-binding repeat units lie at residues 730-747 (FGSRFTDIFHGAKGDDEI), 748-765 (YGNDGHDILYGDDGNDVI), 766-783 (HGGDGNDHLVGGNGNDRL), 784-801 (IGGKGNNFLNGGDGDDEL), 812-829 (LGGAGNDILYGSDGTNLF), and 830-847 (DGGVGNDKIYGGLGKDIY).

This sequence belongs to the RTX prokaryotic toxin (TC 1.C.11) family. Palmitoylated by ApxIC. The toxin only becomes active when modified.

Its subcellular location is the secreted. It is found in the host cell membrane. Functionally, one of the virulence factors of A.pleuropneumoniae, which has a strong hemolytic activity and is cytotoxic for alveolar macrophages and neutrophils. This chain is RTX-I toxin determinant A from serotypes 1/9 (apxIA), found in Actinobacillus pleuropneumoniae (Haemophilus pleuropneumoniae).